A 368-amino-acid polypeptide reads, in one-letter code: tRNA/tmRNA (uracil-C(5))-methyltransferase (368 aa).

S-adenosyl-L-methionine contacts are provided by Q192, Y220, N225, E241, and D301. The active-site Nucleophile is C326. E360 acts as the Proton acceptor in catalysis.

Belongs to the class I-like SAM-binding methyltransferase superfamily. RNA M5U methyltransferase family. TrmA subfamily.

It carries out the reaction uridine(54) in tRNA + S-adenosyl-L-methionine = 5-methyluridine(54) in tRNA + S-adenosyl-L-homocysteine + H(+). It catalyses the reaction uridine(341) in tmRNA + S-adenosyl-L-methionine = 5-methyluridine(341) in tmRNA + S-adenosyl-L-homocysteine + H(+). Dual-specificity methyltransferase that catalyzes the formation of 5-methyluridine at position 54 (m5U54) in all tRNAs, and that of position 341 (m5U341) in tmRNA (transfer-mRNA). The sequence is that of tRNA/tmRNA (uracil-C(5))-methyltransferase from Actinobacillus pleuropneumoniae serotype 7 (strain AP76).